Reading from the N-terminus, the 275-residue chain is Small ribosomal subunit protein uS3 (275 aa).

The 69-residue stretch at 39 to 107 (VRIYLKKKLK…PVHVNIEEIR (69 aa)) folds into the KH type-2 domain. The tract at residues 216–275 (AAATSAEPAAEEKKTRRAPSKTAARKPAAGTDKPLVAAKPAVKRVRKVETPAADTQKSGE) is disordered.

Belongs to the universal ribosomal protein uS3 family. In terms of assembly, part of the 30S ribosomal subunit. Forms a tight complex with proteins S10 and S14.

Its function is as follows. Binds the lower part of the 30S subunit head. Binds mRNA in the 70S ribosome, positioning it for translation. This Polynucleobacter asymbioticus (strain DSM 18221 / CIP 109841 / QLW-P1DMWA-1) (Polynucleobacter necessarius subsp. asymbioticus) protein is Small ribosomal subunit protein uS3.